We begin with the raw amino-acid sequence, 300 residues long: uncharacterized protein (300 aa).

Residue Ser-49 is the Charge relay system of the active site. Tyr-137 serves as the catalytic Proton donor. Lys-165 serves as the catalytic Schiff-base intermediate with substrate.

The protein belongs to the DapA family. Homotetramer.

Its subcellular location is the cytoplasm. Its function is as follows. Upon expression in E.coli complements a dapA deletion mutation, but this may not be its physiological function. This is an uncharacterized protein from Rhizobium meliloti (Ensifer meliloti).